Reading from the N-terminus, the 142-residue chain is Fluoride-specific ion channel FluC 1 (142 aa).

A run of 4 helical transmembrane segments spans residues 23-43, 54-74, 79-99, and 116-136; these read VNIA…YLID, LPLG…GLIG, GWLL…FSTF, and LGNV…AVSL. Na(+) is bound by residues glycine 91 and threonine 94.

It belongs to the fluoride channel Fluc/FEX (TC 1.A.43) family.

The protein resides in the cell membrane. The catalysed reaction is fluoride(in) = fluoride(out). Its activity is regulated as follows. Na(+) is not transported, but it plays an essential structural role and its presence is essential for fluoride channel function. Its function is as follows. Fluoride-specific ion channel. Important for reducing fluoride concentration in the cell, thus reducing its toxicity. In Nocardia farcinica (strain IFM 10152), this protein is Fluoride-specific ion channel FluC 1.